The following is a 161-amino-acid chain: Cyclic pyranopterin monophosphate synthase (161 aa).

Residues 75–77 and 113–114 each bind substrate; these read LCH and ME. Residue D128 is part of the active site.

Belongs to the MoaC family. As to quaternary structure, homohexamer; trimer of dimers.

The enzyme catalyses (8S)-3',8-cyclo-7,8-dihydroguanosine 5'-triphosphate = cyclic pyranopterin phosphate + diphosphate. The protein operates within cofactor biosynthesis; molybdopterin biosynthesis. Catalyzes the conversion of (8S)-3',8-cyclo-7,8-dihydroguanosine 5'-triphosphate to cyclic pyranopterin monophosphate (cPMP). The sequence is that of Cyclic pyranopterin monophosphate synthase from Shigella sonnei (strain Ss046).